Here is a 796-residue protein sequence, read N- to C-terminus: RalBP1-associated Eps domain-containing protein 1 (796 aa).

The 104-residue stretch at 10–113 (EQKYYSDLFS…SKNEQESRHA (104 aa)) folds into the EH 1 domain. The segment at 105–237 (KNEQESRHAA…ENWVSFADTP (133 aa)) is disordered. Polar residues predominate over residues 115–126 (SYSSDSENQGSY). Ser143, Ser145, Ser162, Ser166, and Ser170 each carry phosphoserine. Polar residues predominate over residues 145–156 (SHDTVQPRTSAD). Thr173 carries the post-translational modification Phosphothreonine. 2 positions are modified to phosphoserine: Ser272 and Ser273. The 90-residue stretch at 285-374 (QRQYYVNQFK…ESLMPKLIDL (90 aa)) folds into the EH 2 domain. A Phosphotyrosine modification is found at Tyr288. Position 307 is a phosphoserine (Ser307). Residues 318 to 353 (LPILELSHIWELSDFDKDGALTLDEFCAAFHLVVAR) form the EF-hand domain. Residues Asp331, Asp333, Asp335, and Glu342 each contribute to the Ca(2+) site. Residues 377-433 (SADVGDQPGEVGYSGSPAEAPPSKSPSMPSLNQTWPELNQSSEQWETFSERSSSSQT) form a disordered region. The segment covering 407–433 (LNQTWPELNQSSEQWETFSERSSSSQT) has biased composition (polar residues). 4 positions are modified to phosphoserine: Ser475, Ser482, Ser489, and Ser540. The span at 506–543 (GNTVADGYSSSDSFTSDPEQIGSNVTRQRSHSGTSPDN) shows a compositional bias: polar residues. Disordered regions lie at residues 506–624 (GNTV…IPEQ) and 638–725 (ASNV…QKTG). Thr544 is modified (phosphothreonine). The segment covering 544–554 (TAPPPPPPRPQ) has biased composition (pro residues). The residue at position 562 (Ser562) is a Phosphoserine. Polar residues predominate over residues 563–574 (LDMNRTFTVTTG). Low complexity predominate over residues 575-584 (QQQAGVVAHP). The segment covering 585 to 596 (PAVPPRPQPSQA) has biased composition (pro residues). Residues 612–623 (THTSTSPQQIPE) are compositionally biased toward polar residues. Residues 652–796 (HPEVLPAEKA…LEQLRPFSHL (145 aa)) are interaction with RALBP1. 2 stretches are compositionally biased toward basic and acidic residues: residues 671-681 (AKTDSKTEEKT) and 708-722 (KSED…EHTQ). A phosphoserine mark is found at Ser709 and Ser740. Residues 751-791 (SIRRNKETNTVLARLNSELQQQLKDVLEERISLEVQLEQLR) adopt a coiled-coil conformation.

Homodimer (Potential). Interacts with RAB11FIP2. Interacts with RALBP1, CRK and GRB2. Binding to RALBP1 does not affect its Ral-binding activity. Forms a complex with the SH3 domains of CRK and GRB2 which may link it to an EGF-responsive tyrosine kinase. Interacts with AMPH, ITSN1 (via SH3 domains) and SGIP1; may be involved in clathrin-mediated endocytosis. Post-translationally, EGF stimulates phosphorylation on Tyr-residues. Widely expressed with highest levels in heart and testis.

It localises to the membrane. It is found in the clathrin-coated pit. May coordinate the cellular actions of activated EGF receptors and Ral-GTPases. This is RalBP1-associated Eps domain-containing protein 1 (REPS1) from Homo sapiens (Human).